Reading from the N-terminus, the 1684-residue chain is GRIP and coiled-coil domain-containing protein 2 (1684 aa).

M1 is subject to N-acetylmethionine. The disordered stretch occupies residues 1–22; sequence MEDLVQDGVASPATPGTGKSKL. A Phosphoserine modification is found at S11. T14 bears the Phosphothreonine mark. Positions 110-1618 form a coiled coil; it reads VTKMGDAHKE…REKSAANLEY (1509 aa). Residues S236, S1483, and S1487 each carry the phosphoserine modification. A disordered region spans residues 1475–1502; sequence LKNEPTTRSPVSSQQSLKNLRERRNTDL. A compositionally biased stretch (polar residues) spans 1477-1492; sequence NEPTTRSPVSSQQSLK. Positions 1574–1613 are mediates interaction with RAB6A; the sequence is HLNGLLRETEATNAILMEQIKLLKSEIRRLERNQEREKSA. Residues 1574–1684 are mediates interaction with RAB9A; it reads HLNGLLRETE…SYLHSWSGLR (111 aa). The region spanning 1609-1659 is the GRIP domain; it reads REKSAANLEYLKNVLLQFIFLKPGSERERLLPVINTMLQLSPEEKGKLAAV.

As to quaternary structure, homodimer. Interacts (via GRIP domain) with RAB6A (preferentially in its GTP-bound form). May interact (RAB6A-dependent) with ARL1; according to PubMed:19703403, RAB6A and ARL1 are not involved in GCC2 Golgi localization as proposed by PubMed:18243103. Interacts (probably via GRIP domain) with RAB9A (preferentially in its GTP-bound form). Interacts with CLASP1 and CLASP2; recruits both proteins to membranes of the TGN. Interacts with STX16. Ubiquitous.

The protein localises to the cytoplasm. It localises to the golgi apparatus. It is found in the trans-Golgi network membrane. Its function is as follows. Golgin which probably tethers transport vesicles to the trans-Golgi network (TGN) and regulates vesicular transport between the endosomes and the Golgi. As a RAB9A effector it is involved in recycling of the mannose 6-phosphate receptor from the late endosomes to the TGN. May also play a role in transport between the recycling endosomes and the Golgi. Required for maintenance of the Golgi structure, it is involved in the biogenesis of noncentrosomal, Golgi-associated microtubules through recruitment of CLASP1 and CLASP2. The chain is GRIP and coiled-coil domain-containing protein 2 (GCC2) from Homo sapiens (Human).